Here is an 870-residue protein sequence, read N- to C-terminus: Valine--tRNA ligase (870 aa).

Residues 42-52 carry the 'HIGH' region motif; the sequence is PNVTGVLHIGH. Residues 527–531 carry the 'KMSKS' region motif; it reads KMSKS. ATP is bound at residue Lys530. Residues 800-870 adopt a coiled-coil conformation; it reads LENVDLSGIL…ISVELQNLRG (71 aa).

It belongs to the class-I aminoacyl-tRNA synthetase family. ValS type 1 subfamily. Monomer.

The protein resides in the cytoplasm. The enzyme catalyses tRNA(Val) + L-valine + ATP = L-valyl-tRNA(Val) + AMP + diphosphate. Its function is as follows. Catalyzes the attachment of valine to tRNA(Val). As ValRS can inadvertently accommodate and process structurally similar amino acids such as threonine, to avoid such errors, it has a 'posttransfer' editing activity that hydrolyzes mischarged Thr-tRNA(Val) in a tRNA-dependent manner. The protein is Valine--tRNA ligase of Campylobacter jejuni subsp. jejuni serotype O:2 (strain ATCC 700819 / NCTC 11168).